A 513-amino-acid polypeptide reads, in one-letter code: Maturase K (513 aa).

It belongs to the intron maturase 2 family. MatK subfamily.

The protein resides in the plastid. It is found in the chloroplast. Usually encoded in the trnK tRNA gene intron. Probably assists in splicing its own and other chloroplast group II introns. The sequence is that of Maturase K from Cynodon dactylon (Bermuda grass).